A 340-amino-acid polypeptide reads, in one-letter code: Glutaminase 2 (340 aa).

Residues serine 89, asparagine 140, asparagine 191, tyrosine 215, and tyrosine 267 each contribute to the substrate site.

The protein belongs to the glutaminase family. As to quaternary structure, homotetramer.

It carries out the reaction L-glutamine + H2O = L-glutamate + NH4(+). This is Glutaminase 2 from Yersinia pestis.